Here is a 146-residue protein sequence, read N- to C-terminus: Hemoglobin subunit beta-2 (146 aa).

Residues 2–146 (GLTAHEKQLI…IADALGKGYH (145 aa)) enclose the Globin domain. Heme b contacts are provided by H63 and H92.

This sequence belongs to the globin family. As to quaternary structure, heterotetramer of two alpha chains and two beta chains. Red blood cells.

Functionally, involved in oxygen transport from the lung to the various peripheral tissues. This chain is Hemoglobin subunit beta-2 (hbb2), found in Xenopus borealis (Kenyan clawed frog).